The following is a 425-amino-acid chain: UPF0597 protein VIBHAR_03081 (425 aa).

Belongs to the UPF0597 family.

This is UPF0597 protein VIBHAR_03081 from Vibrio campbellii (strain ATCC BAA-1116).